A 529-amino-acid polypeptide reads, in one-letter code: GMP synthase [glutamine-hydrolyzing] (529 aa).

Residues 17 to 206 form the Glutamine amidotransferase type-1 domain; sequence TILVLDFGSQ…AIDICQASNN (190 aa). Cys93 serves as the catalytic Nucleophile. Catalysis depends on residues His180 and Glu182. Residues 207–404 enclose the GMPS ATP-PPase domain; the sequence is WTMENFIDTE…MGVPHDLVWR (198 aa). 235–241 is an ATP binding site; it reads SGGVDST. XMP contacts are provided by Arg308, Asp466, Lys521, and Glu527.

Homodimer. Requires Mg(2+) as cofactor.

It is found in the cytoplasm. The protein localises to the cytosol. It catalyses the reaction XMP + L-glutamine + ATP + H2O = GMP + L-glutamate + AMP + diphosphate + 2 H(+). It participates in purine metabolism; GMP biosynthesis; GMP from XMP (L-Gln route): step 1/1. In terms of biological role, catalyzes the conversion of xanthine monophosphate (XMP) to GMP in the presence of glutamine and ATP through an adenyl-XMP intermediate. This Debaryomyces hansenii (strain ATCC 36239 / CBS 767 / BCRC 21394 / JCM 1990 / NBRC 0083 / IGC 2968) (Yeast) protein is GMP synthase [glutamine-hydrolyzing] (GUA1).